The following is a 100-amino-acid chain: Small ribosomal subunit protein uS14c (100 aa).

It belongs to the universal ribosomal protein uS14 family. As to quaternary structure, part of the 30S ribosomal subunit.

It is found in the plastid. It localises to the chloroplast. In terms of biological role, binds 16S rRNA, required for the assembly of 30S particles. This chain is Small ribosomal subunit protein uS14c, found in Gossypium barbadense (Sea Island cotton).